Here is a 379-residue protein sequence, read N- to C-terminus: Queuine tRNA-ribosyltransferase (379 aa).

Asp-94 (proton acceptor) is an active-site residue. Substrate is bound by residues 94–98 (DSGGF), Asp-148, Gln-191, and Gly-218. Positions 249–255 (GVGSPDS) are RNA binding. Asp-268 (nucleophile) is an active-site residue. An RNA binding; important for wobble base 34 recognition region spans residues 273–277 (TRIAR). Zn(2+) contacts are provided by Cys-306, Cys-308, Cys-311, and His-337.

Belongs to the queuine tRNA-ribosyltransferase family. Homodimer. Within each dimer, one monomer is responsible for RNA recognition and catalysis, while the other monomer binds to the replacement base PreQ1. Zn(2+) serves as cofactor.

It catalyses the reaction 7-aminomethyl-7-carbaguanine + guanosine(34) in tRNA = 7-aminomethyl-7-carbaguanosine(34) in tRNA + guanine. The protein operates within tRNA modification; tRNA-queuosine biosynthesis. In terms of biological role, catalyzes the base-exchange of a guanine (G) residue with the queuine precursor 7-aminomethyl-7-deazaguanine (PreQ1) at position 34 (anticodon wobble position) in tRNAs with GU(N) anticodons (tRNA-Asp, -Asn, -His and -Tyr). Catalysis occurs through a double-displacement mechanism. The nucleophile active site attacks the C1' of nucleotide 34 to detach the guanine base from the RNA, forming a covalent enzyme-RNA intermediate. The proton acceptor active site deprotonates the incoming PreQ1, allowing a nucleophilic attack on the C1' of the ribose to form the product. After dissociation, two additional enzymatic reactions on the tRNA convert PreQ1 to queuine (Q), resulting in the hypermodified nucleoside queuosine (7-(((4,5-cis-dihydroxy-2-cyclopenten-1-yl)amino)methyl)-7-deazaguanosine). The chain is Queuine tRNA-ribosyltransferase from Listeria innocua serovar 6a (strain ATCC BAA-680 / CLIP 11262).